A 634-amino-acid chain; its full sequence is AAl-toxin cluster-specific transcription factor ALT13 (634 aa).

The zn(2)-C6 fungal-type DNA-binding region spans 30–56 (CENCKRRKVRCSGANPCEQCLKVNVHC). A disordered region spans residues 66-89 (RRSVPNSGADKNNQQGDTDRHNGA). Polar residues predominate over residues 69–81 (VPNSGADKNNQQG).

It is found in the nucleus. Functionally, transcription factor that regulates the expression of the gene cluster that mediates the biosynthesis of AAL-toxins, sphinganine-analog mycotoxins responsible for Alternaria stem canker on tomato by the tomato pathotype. This Alternaria alternata (Alternaria rot fungus) protein is AAl-toxin cluster-specific transcription factor ALT13.